A 184-amino-acid chain; its full sequence is MGVIQTLDRLMTNPMPEGRVEDILRPEGENPLLEKGYVTTSVDALLNWARTGSMWPMTFGLACCAVEMMHAGASRLDLDRYGVVFRPSPRQSDVMIVAGTLVNKMAPALRKVYDQMPDPKWVISMGSCANGGGYYHYSYSVVRGCDRIVPVDIYVPGCPPTAEALVYGILQLQKKIWRTQTIAR.

The [4Fe-4S] cluster site is built by Cys63, Cys64, Cys128, and Cys158.

It belongs to the complex I 20 kDa subunit family. In terms of assembly, NDH-1 is composed of 14 different subunits. Subunits NuoB, C, D, E, F, and G constitute the peripheral sector of the complex. Requires [4Fe-4S] cluster as cofactor.

Its subcellular location is the cell inner membrane. The catalysed reaction is a quinone + NADH + 5 H(+)(in) = a quinol + NAD(+) + 4 H(+)(out). In terms of biological role, NDH-1 shuttles electrons from NADH, via FMN and iron-sulfur (Fe-S) centers, to quinones in the respiratory chain. The immediate electron acceptor for the enzyme in this species is believed to be ubiquinone. Couples the redox reaction to proton translocation (for every two electrons transferred, four hydrogen ions are translocated across the cytoplasmic membrane), and thus conserves the redox energy in a proton gradient. The chain is NADH-quinone oxidoreductase subunit B from Xanthomonas oryzae pv. oryzae (strain MAFF 311018).